The chain runs to 389 residues: Alkanesulfonate monooxygenase (389 aa).

This sequence belongs to the SsuD family.

It carries out the reaction an alkanesulfonate + FMNH2 + O2 = an aldehyde + FMN + sulfite + H2O + 2 H(+). Catalyzes the desulfonation of aliphatic sulfonates. In Variovorax paradoxus (strain S110), this protein is Alkanesulfonate monooxygenase.